Consider the following 285-residue polypeptide: Putative sugar uptake protein lmo0169 (285 aa).

A run of 10 helical transmembrane segments spans residues 5 to 24, 31 to 48, 53 to 71, 84 to 106, 116 to 135, 151 to 173, 178 to 195, 207 to 226, 232 to 254, and 263 to 282; these read IALI…SKIG, IIGT…VFIF, YTAT…WSLG, VSKT…GVFA, LVLG…LTSY, IITL…WFDI, AILP…LFSI, WLNM…LLFS, IATG…ILFL, and LILV…MIGI.

This sequence belongs to the GRP transporter (TC 2.A.7.5) family.

It is found in the cell membrane. The protein is Putative sugar uptake protein lmo0169 of Listeria monocytogenes serovar 1/2a (strain ATCC BAA-679 / EGD-e).